The primary structure comprises 210 residues: MNILLSSTLFVLLMFQIIGSGMGCDMKVRGLDANMKKMILDLHNKKRQIVANGQQSGQPSAANMKELHWNDEIAANAQRSAETCVFEHTAKSLRKTTKYSYLGENIYKGSYPDPIPRSVNAWYDEVKDVTPAVVKSFSSGGPMIGHYTQMVWANTEALGCGLVTASDRNSYLFCQYGPGGNYRSQPIYKQGPPASDCKNGKSSKYPGLCN.

The signal sequence occupies residues 1-23 (MNILLSSTLFVLLMFQIIGSGMG).

Post-translationally, contains 3 disulfide bonds. In terms of tissue distribution, expressed by the venom gland.

Its subcellular location is the secreted. Functionally, voltage-gated calcium channel inhibitor. In Scolopendra dehaani (Thai centipede), this protein is Scoloptoxin SSD976.